The chain runs to 433 residues: MTSSQELFDHARELMPGGVNSPVRAFGSVGGTPRFITSAQGAYLTDADGRDYVDLVCSWGPALLGHAHPEVIAAVHAAVDRGLSFGASTPAETELAELVLGRVSAVERLRMVSTGTEATMTAVRLARGFTGRNLIVKFAGCYHGHVDSLLAAAGSGLATLAMPGSAGVTEATAAETLVLPYNDLEAVREVFAVHGGQIAAVITEAAPANMGVVEPAPGFNAGLAQITREHGALLILDEVLTGFRVGPSGYWGLTGASEGWTPDLLTFGKVVGGGLPTAALGGRADVMEYLAPFGPVYQAGTLSGNPVAMAAGVATLKAATADVYDQVDARSLELSAALSRALEAEGVQHSVQRAGNLFSVAFGVSEVRNYADAKAQETFRYAPFFHSMLDSGVYLPPSVFEAWFLSAAHDDTAMNRIFDALPSAAKAAAAATV.

K269 carries the N6-(pyridoxal phosphate)lysine modification.

This sequence belongs to the class-III pyridoxal-phosphate-dependent aminotransferase family. HemL subfamily. As to quaternary structure, homodimer. Pyridoxal 5'-phosphate is required as a cofactor.

The protein localises to the cytoplasm. The catalysed reaction is (S)-4-amino-5-oxopentanoate = 5-aminolevulinate. It functions in the pathway porphyrin-containing compound metabolism; protoporphyrin-IX biosynthesis; 5-aminolevulinate from L-glutamyl-tRNA(Glu): step 2/2. This is Glutamate-1-semialdehyde 2,1-aminomutase from Renibacterium salmoninarum (strain ATCC 33209 / DSM 20767 / JCM 11484 / NBRC 15589 / NCIMB 2235).